The chain runs to 828 residues: Periplasmic nitrate reductase (828 aa).

Residues 1-31 (MKLSRRSFMKANAVAAAAAAAGLSVPGVARA) constitute a signal peptide (tat-type signal). Residues 39 to 95 (IKWDKAPCRFCGTGCGVLVGTQQGRVVACQGDPDAPVNRGLNCIKGYFLPKIMYGKD) form the 4Fe-4S Mo/W bis-MGD-type domain. [4Fe-4S] cluster-binding residues include C46, C49, C53, and C81. Mo-bis(molybdopterin guanine dinucleotide)-binding positions include K83, Q150, N175, C179, 212–219 (WGANMAEM), 243–247 (STYQH), 262–264 (QSD), M372, Q376, N482, 508–509 (SD), K531, D558, and 718–727 (TGRVLEHWHT). F794 lines the substrate pocket. Mo-bis(molybdopterin guanine dinucleotide) contacts are provided by N802 and K819.

This sequence belongs to the prokaryotic molybdopterin-containing oxidoreductase family. NasA/NapA/NarB subfamily. Component of the periplasmic nitrate reductase NapAB complex composed of NapA and NapB. [4Fe-4S] cluster serves as cofactor. Mo-bis(molybdopterin guanine dinucleotide) is required as a cofactor. Post-translationally, predicted to be exported by the Tat system. The position of the signal peptide cleavage has not been experimentally proven.

Its subcellular location is the periplasm. It catalyses the reaction 2 Fe(II)-[cytochrome] + nitrate + 2 H(+) = 2 Fe(III)-[cytochrome] + nitrite + H2O. Functionally, catalytic subunit of the periplasmic nitrate reductase complex NapAB. Receives electrons from NapB and catalyzes the reduction of nitrate to nitrite. The protein is Periplasmic nitrate reductase of Escherichia coli O7:K1 (strain IAI39 / ExPEC).